Here is a 524-residue protein sequence, read N- to C-terminus: Acetyl-CoA hydrolase (524 aa).

275–279 contacts CoA; that stretch reads GIGNI. Glu300 (5-glutamyl coenzyme A thioester intermediate) is an active-site residue. Residues Asn390 and Gly394 each contribute to the CoA site.

Belongs to the acetyl-CoA hydrolase/transferase family.

It localises to the cytoplasm. The enzyme catalyses acetyl-CoA + H2O = acetate + CoA + H(+). In terms of biological role, presumably involved in regulating the intracellular acetyl-CoA pool for fatty acid and cholesterol synthesis and fatty acid oxidation. In Candida albicans (strain SC5314 / ATCC MYA-2876) (Yeast), this protein is Acetyl-CoA hydrolase (ACH1).